Consider the following 195-residue polypeptide: Interferon tau-8 (195 aa).

Residues M1–G23 form the signal peptide. Intrachain disulfides connect C24–C122 and C52–C162.

This sequence belongs to the alpha/beta interferon family. IFN-alphaII subfamily. In terms of tissue distribution, constitutively and exclusively expressed in the mononuclear cells of the extraembryonic trophectoderm.

The protein resides in the secreted. In terms of biological role, paracrine hormone primarily responsible for maternal recognition of pregnancy. Interacts with endometrial receptors, probably type I interferon receptors, and blocks estrogen receptor expression, preventing the estrogen-induced increase in oxytocin receptor expression in the endometrium. This results in the suppression of the pulsatile endometrial release of the luteolytic hormone prostaglandin F2-alpha, hindering the regression of the corpus luteum (luteolysis) and therefore a return to ovarian cyclicity. This, and a possible direct effect of IFN-tau on prostaglandin synthesis, leads in turn to continued ovarian progesterone secretion, which stimulates the secretion by the endometrium of the nutrients required for the growth of the conceptus. In summary, displays particularly high antiviral and antiproliferative potency concurrently with particular weak cytotoxicity, high antiluteolytic activity and immunomodulatory properties. In contrast with other IFNs, IFN-tau is not virally inducible. The polypeptide is Interferon tau-8 (IFNT8) (Ovis aries (Sheep)).